We begin with the raw amino-acid sequence, 225 residues long: Probable manganese catalase (225 aa).

A Mn(2+)-binding site is contributed by Glu37. Ca(2+)-binding residues include Asp58 and Asp62. Residues Glu67, His70, Glu138, and His171 each coordinate Mn(2+). Ser204 provides a ligand contact to Ca(2+). The segment at Ser204–Arg225 is disordered. Polar residues predominate over residues Pro213–Arg225.

The protein belongs to the manganese catalase family. Ca(2+) is required as a cofactor. Mn(2+) serves as cofactor.

It carries out the reaction 2 H2O2 = O2 + 2 H2O. In terms of biological role, catalyzes the decomposition of hydrogen peroxide into water and oxygen. The chain is Probable manganese catalase from Clostridium acetobutylicum (strain ATCC 824 / DSM 792 / JCM 1419 / IAM 19013 / LMG 5710 / NBRC 13948 / NRRL B-527 / VKM B-1787 / 2291 / W).